The following is a 393-amino-acid chain: Isocitrate dehydrogenase [NAD] subunit gamma 1, mitochondrial (393 aa).

The N-terminal 39 residues, 1–39, are a transit peptide targeting the mitochondrion; that stretch reads MALKVAIAAGSAAKAIFKPALLCRPWEVLAAHEAPRRSI. Position 120 (threonine 120) interacts with citrate. Residue serine 130 is modified to Phosphoserine. Asparagine 133 serves as a coordination point for citrate. Residues arginine 136 and arginine 167 each contribute to the substrate site. Lysine 206 is modified (N6-acetyllysine). N6-succinyllysine is present on lysine 226. Aspartate 254 serves as a coordination point for substrate. Aspartate 254 lines the Mn(2+) pocket. Residues asparagine 312, threonine 313, and asparagine 324 each contribute to the ADP site.

The protein belongs to the isocitrate and isopropylmalate dehydrogenases family. Heterooligomer of subunits alpha (IDH3A), beta (IDH3B), and gamma (IDH3G) in the apparent ratio of 2:1:1. The heterodimer containing one IDH3A and one IDH3B subunit and the heterodimer containing one IDH3A and one IDH3G subunit assemble into a heterotetramer (which contains two subunits of IDH3A, one of IDH3B and one of IDH3G) and further into the heterooctamer. Mg(2+) is required as a cofactor. Mn(2+) serves as cofactor.

The protein localises to the mitochondrion. With respect to regulation, the heterotetramer and the heterodimer composed of IDH3A and IDH3G subunits can be allosterically activated by citrate (CIT) or/and ADP, and the two activators can act independently or synergistically. The heterodimer composed of IDH3A and IDH3B subunits cannot be allosterically regulated and the allosteric regulation of the heterotetramer is through the IDH3G subunit and not the IDH3B subunit. The IDH3G subunit contains the allosteric site which consists of a CIT-binding site and an ADP-binding site, and the binding of CIT and ADP causes conformational changes at the allosteric site which are transmitted to the active site in the catalytic subunit (IDH3A) through a cascade of conformational changes at the heterodimer interface, leading to stabilization of the isocitrate-binding at the active site and thus activation of the enzyme. ATP can activate the heterotetramer and the heterodimer composed of IDH3A and IDH3G subunits at low concentrations but inhibits their activities at high concentrations, whereas ATP exhibits only inhibitory effect on the heterodimer composed of IDH3A and IDH3B subunits. In terms of biological role, regulatory subunit which plays a role in the allosteric regulation of the enzyme catalyzing the decarboxylation of isocitrate (ICT) into alpha-ketoglutarate. The heterodimer composed of the alpha (IDH3A) and beta (IDH3B) subunits and the heterodimer composed of the alpha (IDH3A) and gamma (IDH3G) subunits, have considerable basal activity but the full activity of the heterotetramer (containing two subunits of IDH3A, one of IDH3B and one of IDH3G) requires the assembly and cooperative function of both heterodimers. The protein is Isocitrate dehydrogenase [NAD] subunit gamma 1, mitochondrial (Idh3g) of Rattus norvegicus (Rat).